The sequence spans 330 residues: Protein FAM170A (330 aa).

Disordered stretches follow at residues 1–54, 76–104, and 169–218; these read MKRR…VTST, HRDS…HVSL, and VGTP…AKTP. Over residues 174 to 185 the composition is skewed to polar residues; sequence SDVSTRNLLSDS. The segment covering 189-200 has biased composition (basic and acidic residues); the sequence is GEEKEHEERTES. Thr-217 is modified (phosphothreonine). The C2H2-type; degenerate zinc-finger motif lies at 228-252; the sequence is FRCMACCRVFTTMEALQEHVQFGIR. The segment at 270–330 is disordered; the sequence is NMESESTQDE…VFHSPKDRNS (61 aa). A compositionally biased stretch (acidic residues) spans 275–293; it reads STQDEQEEENGNEKEEEEK. A Phosphoserine modification is found at Ser-315.

Belongs to the FAM170 family. In terms of tissue distribution, expressed strongly in testis and brain and weakly in prostate, spleen, pancreas and uterus.

The protein resides in the nucleus. Its function is as follows. Acts as a nuclear transcription factor that positively regulates the expression of heat shock genes. Binds to heat shock promoter elements (HSE). In Homo sapiens (Human), this protein is Protein FAM170A (FAM170A).